Here is a 221-residue protein sequence, read N- to C-terminus: tRNA (guanine-N(7)-)-methyltransferase (221 aa).

Positions 46, 71, and 120 each coordinate S-adenosyl-L-methionine. Asp120 is a catalytic residue. Asp156 is a substrate binding site.

The protein belongs to the class I-like SAM-binding methyltransferase superfamily. TrmB family.

The enzyme catalyses guanosine(46) in tRNA + S-adenosyl-L-methionine = N(7)-methylguanosine(46) in tRNA + S-adenosyl-L-homocysteine. Its pathway is tRNA modification; N(7)-methylguanine-tRNA biosynthesis. Functionally, catalyzes the formation of N(7)-methylguanine at position 46 (m7G46) in tRNA. This Cytophaga hutchinsonii (strain ATCC 33406 / DSM 1761 / CIP 103989 / NBRC 15051 / NCIMB 9469 / D465) protein is tRNA (guanine-N(7)-)-methyltransferase.